The chain runs to 500 residues: Glucose-1-phosphate adenylyltransferase small subunit 1, chloroplastic/amyloplastic (500 aa).

The N-terminal 50 residues, 1-50, are a transit peptide targeting the chloroplast; it reads MAMMAMGAASWAPIPAPARAAAAFYPGRDLAAARRRRGAAARRPFVFTPR.

This sequence belongs to the bacterial/plant glucose-1-phosphate adenylyltransferase family. Heterotetramer composed of two small and two large subunits. In terms of tissue distribution, expressed in leaves.

The protein resides in the plastid. The protein localises to the chloroplast. It localises to the amyloplast. It catalyses the reaction alpha-D-glucose 1-phosphate + ATP + H(+) = ADP-alpha-D-glucose + diphosphate. It participates in glycan biosynthesis; starch biosynthesis. Activated by 3'phosphoglycerate, inhibited by orthophosphate. Allosteric regulation. Functionally, involved in synthesis of starch. Catalyzes the synthesis of ADP-glucose, a molecule that serves as an activated glycosyl donor for alpha-1,4-glucan synthesis. Essential for starch synthesis in leaf chloroplasts and endosperm amyloplasts. This chain is Glucose-1-phosphate adenylyltransferase small subunit 1, chloroplastic/amyloplastic, found in Oryza sativa subsp. japonica (Rice).